The primary structure comprises 333 residues: Ribose-phosphate pyrophosphokinase (333 aa).

58-60 (DGE) serves as a coordination point for ATP. His-151 and Asp-190 together coordinate Mg(2+). Lys-214 is a catalytic residue. Residues Arg-216, Asp-240, and 244–248 (DTAGT) contribute to the D-ribose 5-phosphate site.

This sequence belongs to the ribose-phosphate pyrophosphokinase family. Class I subfamily. In terms of assembly, homohexamer. Mg(2+) serves as cofactor.

It localises to the cytoplasm. The enzyme catalyses D-ribose 5-phosphate + ATP = 5-phospho-alpha-D-ribose 1-diphosphate + AMP + H(+). It participates in metabolic intermediate biosynthesis; 5-phospho-alpha-D-ribose 1-diphosphate biosynthesis; 5-phospho-alpha-D-ribose 1-diphosphate from D-ribose 5-phosphate (route I): step 1/1. In terms of biological role, involved in the biosynthesis of the central metabolite phospho-alpha-D-ribosyl-1-pyrophosphate (PRPP) via the transfer of pyrophosphoryl group from ATP to 1-hydroxyl of ribose-5-phosphate (Rib-5-P). This is Ribose-phosphate pyrophosphokinase from Synechocystis sp. (strain ATCC 27184 / PCC 6803 / Kazusa).